Here is a 233-residue protein sequence, read N- to C-terminus: 2,3-bisphosphoglycerate-dependent phosphoglycerate mutase (233 aa).

Substrate contacts are provided by residues 8–15 (RHGQSLWN), 21–22 (TG), arginine 60, 116–119 (ERYY), lysine 127, 143–144 (RR), and 187–188 (GN). Histidine 9 acts as the Tele-phosphohistidine intermediate in catalysis. The Proton donor/acceptor role is filled by glutamate 116.

Belongs to the phosphoglycerate mutase family. BPG-dependent PGAM subfamily.

It catalyses the reaction (2R)-2-phosphoglycerate = (2R)-3-phosphoglycerate. Its pathway is carbohydrate degradation; glycolysis; pyruvate from D-glyceraldehyde 3-phosphate: step 3/5. In terms of biological role, catalyzes the interconversion of 2-phosphoglycerate and 3-phosphoglycerate. The polypeptide is 2,3-bisphosphoglycerate-dependent phosphoglycerate mutase (Gloeothece citriformis (strain PCC 7424) (Cyanothece sp. (strain PCC 7424))).